A 285-amino-acid polypeptide reads, in one-letter code: MKYIGAHVSAAGGLANAPARAAEIGATAFALFTKNQRQWRAAPLTPQVIDDFKIACEKYHFSAAQILPHDSYLINLGHPVSEALEKSRDAFLDEMQRCEQLGLTLLNFHPGSHLMQIAQEDCLARIAESINIALAQTEGVTAVIENTAGQGSNLGFEFEQLAAIIDGVEDKSRVGVCIDTCHAFAAGYDLRTPEACEKTFAEFGKIVGFQYLRGMHLNDAKSAFGSRVDRHHSLGEGNIGHDAFRWIMQDARFDGIPLILETINPDIWAEEIAWLKAQQIAEAVA.

9 residues coordinate Zn(2+): His-69, His-109, Glu-145, Asp-179, His-182, His-216, Asp-229, His-231, and Glu-261.

The protein belongs to the AP endonuclease 2 family. Zn(2+) serves as cofactor.

The enzyme catalyses Endonucleolytic cleavage to 5'-phosphooligonucleotide end-products.. Endonuclease IV plays a role in DNA repair. It cleaves phosphodiester bonds at apurinic or apyrimidinic (AP) sites, generating a 3'-hydroxyl group and a 5'-terminal sugar phosphate. The chain is Probable endonuclease 4 from Salmonella heidelberg (strain SL476).